The primary structure comprises 128 residues: Sulfurtransferase TusD (128 aa).

Cysteine 78 serves as the catalytic Cysteine persulfide intermediate.

Belongs to the DsrE/TusD family. As to quaternary structure, heterohexamer, formed by a dimer of trimers. The hexameric TusBCD complex contains 2 copies each of TusB, TusC and TusD. The TusBCD complex interacts with TusE.

It localises to the cytoplasm. Part of a sulfur-relay system required for 2-thiolation of 5-methylaminomethyl-2-thiouridine (mnm(5)s(2)U) at tRNA wobble positions. Accepts sulfur from TusA and transfers it in turn to TusE. The chain is Sulfurtransferase TusD from Enterobacter sp. (strain 638).